A 445-amino-acid polypeptide reads, in one-letter code: NADH-quinone oxidoreductase subunit F (445 aa).

Residue 61 to 70 (GRGGAGFSTG) participates in NAD(+) binding. 174 to 221 (GAGRYICGEETALINSLEGRRANPRSKPPFPATSGAWGKPTCVNNVET) provides a ligand contact to FMN. The [4Fe-4S] cluster site is built by C351, C354, C357, and C398.

It belongs to the complex I 51 kDa subunit family. In terms of assembly, composed of 13 different subunits. Subunits NuoCD, E, F, and G constitute the peripheral sector of the complex. It depends on FMN as a cofactor. [4Fe-4S] cluster serves as cofactor.

The catalysed reaction is a quinone + NADH + 5 H(+)(in) = a quinol + NAD(+) + 4 H(+)(out). NDH-1 shuttles electrons from NADH, via FMN and iron-sulfur (Fe-S) centers, to quinones in the respiratory chain. The immediate electron acceptor for the enzyme in this species is believed to be ubiquinone. Couples the redox reaction to proton translocation (for every two electrons transferred, four hydrogen ions are translocated across the cytoplasmic membrane), and thus conserves the redox energy in a proton gradient. The polypeptide is NADH-quinone oxidoreductase subunit F (nuoF) (Escherichia coli (strain K12)).